The following is a 453-amino-acid chain: Ribosomal protein uS12 methylthiotransferase RimO (453 aa).

The MTTase N-terminal domain occupies 5–120; it reads PKVGFVSLGC…VMQAVHSHLP (116 aa). The [4Fe-4S] cluster site is built by C14, C50, C79, C151, C155, and C158. Residues 137-383 enclose the Radical SAM core domain; that stretch reads LTPRHYAYLK…EVAEEVSAHR (247 aa). In terms of domain architecture, TRAM spans 385 to 453; that stretch reads QRKVGKTLKV…ADGHDLWGEV (69 aa).

This sequence belongs to the methylthiotransferase family. RimO subfamily. Requires [4Fe-4S] cluster as cofactor.

Its subcellular location is the cytoplasm. The enzyme catalyses L-aspartate(89)-[ribosomal protein uS12]-hydrogen + (sulfur carrier)-SH + AH2 + 2 S-adenosyl-L-methionine = 3-methylsulfanyl-L-aspartate(89)-[ribosomal protein uS12]-hydrogen + (sulfur carrier)-H + 5'-deoxyadenosine + L-methionine + A + S-adenosyl-L-homocysteine + 2 H(+). Catalyzes the methylthiolation of an aspartic acid residue of ribosomal protein uS12. The polypeptide is Ribosomal protein uS12 methylthiotransferase RimO (Burkholderia cenocepacia (strain ATCC BAA-245 / DSM 16553 / LMG 16656 / NCTC 13227 / J2315 / CF5610) (Burkholderia cepacia (strain J2315))).